Here is a 94-residue protein sequence, read N- to C-terminus: MGSELETAMETLINVFHAHSGKEGDKYKLSKKELKELLQTELSGFLDAQKDVDAVDKVMKELDENGDGEVDFQEYVVLVAALTVACNNFFWENS.

2 EF-hand domains span residues 13 to 48 (INVFHAHSGKEGDKYKLSKKELKELLQTELSGFLDA) and 50 to 85 (KDVDAVDKVMKELDENGDGEVDFQEYVVLVAALTVA). Positions 28, 33, 63, 65, 67, 69, and 74 each coordinate Ca(2+). The residue at position 86 (Cys-86) is an S-nitrosocysteine.

It belongs to the S-100 family. Dimer of either two alpha chains, or two beta chains, or one alpha and one beta chain. Also forms heterodimers with S100P. Interacts with AGER. Interacts with CAPZA1. Interacts with FKBP4. Interacts with RYR1 and RYR2. Interacts with CACYBP in a calcium-dependent manner. Interacts with PPP5C (via TPR repeats); the interaction is calcium-dependent and modulates PPP5C activity. Interacts with ATP2A2 and PLN in a Ca(2+)-dependent manner. Interacts with mitochondrial F1-ATPase subunits ATP5F1A and ATP5F1B; these interactions increase F1-ATPase activity. In terms of processing, glutathionylated; glutathionylation increases affinity to calcium about 10-fold. As to expression, highly prevalent in heart. Also found in lesser quantities in skeletal muscle and brain.

Its subcellular location is the cytoplasm. It localises to the sarcoplasmic reticulum. The protein resides in the mitochondrion. In terms of biological role, small calcium binding protein that plays important roles in several biological processes such as Ca(2+) homeostasis, chondrocyte biology and cardiomyocyte regulation. In response to an increase in intracellular Ca(2+) levels, binds calcium which triggers conformational changes. These changes allow interactions with specific target proteins and modulate their activity. Regulates a network in cardiomyocytes controlling sarcoplasmic reticulum Ca(2+) cycling and mitochondrial function through interaction with the ryanodine receptors RYR1 and RYR2, sarcoplasmic reticulum Ca(2+)-ATPase/ATP2A2 and mitochondrial F1-ATPase. Facilitates diastolic Ca(2+) dissociation and myofilament mechanics in order to improve relaxation during diastole. This is Protein S100-A1 (S100A1) from Homo sapiens (Human).